The primary structure comprises 129 residues: Large ribosomal subunit protein bL21 (129 aa).

Residues 100–129 form a disordered region; the sequence is DGAKPSKKAAEKKAPKAAPKKAAAKAESAE.

Belongs to the bacterial ribosomal protein bL21 family. As to quaternary structure, part of the 50S ribosomal subunit. Contacts protein L20.

In terms of biological role, this protein binds to 23S rRNA in the presence of protein L20. The sequence is that of Large ribosomal subunit protein bL21 from Brucella anthropi (strain ATCC 49188 / DSM 6882 / CCUG 24695 / JCM 21032 / LMG 3331 / NBRC 15819 / NCTC 12168 / Alc 37) (Ochrobactrum anthropi).